Here is a 467-residue protein sequence, read N- to C-terminus: Glutamate--tRNA ligase (467 aa).

The short motif at 14-24 (PSPTGFLHLGG) is the 'HIGH' region element. Over residues 124 to 134 (PRYDGTWRPEP) the composition is skewed to basic and acidic residues. Residues 124 to 156 (PRYDGTWRPEPGKTLPPVPAGRKPVVRFKNPQD) form a disordered region. Positions 246–250 (KLSKR) match the 'KMSKS' region motif. K249 is an ATP binding site.

This sequence belongs to the class-I aminoacyl-tRNA synthetase family. Glutamate--tRNA ligase type 1 subfamily. In terms of assembly, monomer.

The protein resides in the cytoplasm. It carries out the reaction tRNA(Glu) + L-glutamate + ATP = L-glutamyl-tRNA(Glu) + AMP + diphosphate. Its function is as follows. Catalyzes the attachment of glutamate to tRNA(Glu) in a two-step reaction: glutamate is first activated by ATP to form Glu-AMP and then transferred to the acceptor end of tRNA(Glu). The chain is Glutamate--tRNA ligase from Bordetella petrii (strain ATCC BAA-461 / DSM 12804 / CCUG 43448).